A 37-amino-acid polypeptide reads, in one-letter code: Mu-thomitoxin-Hme1a (37 aa).

Disulfide bonds link C2–C18, C9–C22, and C17–C33. F37 carries the post-translational modification Phenylalanine amide.

This sequence belongs to the neurotoxin 01 (U2-agtx) family. Post-translationally, contains 3 disulfide bonds. As to expression, expressed by the venom gland.

It localises to the secreted. Blocks the Nav1.2/SCN2A, Nav1.4/SCN4A, and Nav1.6/SCN8A sodium channels. Reduces the peak amplitude of the sodium current and negatively shifts the steady-state inactivation process. Does not shift the threshold potential of activation or the voltage corresponding to maximal current. Does not change the reversal potential of the sodium current. May act on site 1 of the receptor. The polypeptide is Mu-thomitoxin-Hme1a (Heriaeus mellotteei (Crab spider)).